Reading from the N-terminus, the 234-residue chain is STARD3 N-terminal-like protein (234 aa).

At Met1 the chain carries N-acetylmethionine. At 1 to 53 (MNHLPEDMENALTGSQSSHASLRNIHSINPTQLMARIESYEGREKKGISDVRR) the chain is on the cytoplasmic side. 3 positions are modified to phosphoserine: Ser15, Ser21, and Ser27. The MENTAL domain occupies 48–218 (ISDVRRTFCL…YSPPESEAGS (171 aa)). The helical transmembrane segment at 54-74 (TFCLFVTFDLLFVTLLWIIEL) threads the bilayer. Residues 75 to 97 (NVNGGIENTLEKEVMQYDYYSSY) lie on the Extracellular side of the membrane. Residues 98–118 (FDIFLLAVFRFKVLILAYAVC) form a helical membrane-spanning segment. Topologically, residues 119–122 (RLRH) are cytoplasmic. Residues 123–143 (WWAIALTTAVTSAFLLAKVIL) form a helical membrane-spanning segment. Residues 144–150 (SKLFSQG) are Extracellular-facing. Residues 151 to 171 (AFGYVLPIISFILAWIETWFL) traverse the membrane as a helical segment. At 172–234 (DFKVLPQEAE…QDSEKPLLEL (63 aa)) the chain is on the cytoplasmic side. Ser193 carries the post-translational modification Phosphoserine. A disordered region spans residues 200–234 (PGGLSDGQFYSPPESEAGSEEAEEKQDSEKPLLEL). Residues 208-213 (FYSPPE) carry the FFAT motif. The segment covering 224–234 (KQDSEKPLLEL) has biased composition (basic and acidic residues).

It belongs to the STARD3 family. In terms of assembly, homodimer. Interacts (via the MENTAL domain) with STARD3NL. Interacts (via FFAT motif) with VAPA. Interacts (via FFAT motif) with VAPB. Interacts (via FFAT motif) with MOSPD2 (via MSP domain).

It is found in the late endosome membrane. Functionally, tethering protein that creates contact site between the endoplasmic reticulum and late endosomes: localizes to late endosome membranes and contacts the endoplasmic reticulum via interaction with VAPA and VAPB. This Homo sapiens (Human) protein is STARD3 N-terminal-like protein.